The sequence spans 551 residues: ATP synthase subunit alpha (551 aa).

Residue 174 to 181 coordinates ATP; it reads GDRQTGKT.

Belongs to the ATPase alpha/beta chains family. In terms of assembly, F-type ATPases have 2 components, CF(1) - the catalytic core - and CF(0) - the membrane proton channel. CF(1) has five subunits: alpha(3), beta(3), gamma(1), delta(1), epsilon(1). CF(0) has three main subunits: a(1), b(2) and c(9-12). The alpha and beta chains form an alternating ring which encloses part of the gamma chain. CF(1) is attached to CF(0) by a central stalk formed by the gamma and epsilon chains, while a peripheral stalk is formed by the delta and b chains.

Its subcellular location is the cell inner membrane. It catalyses the reaction ATP + H2O + 4 H(+)(in) = ADP + phosphate + 5 H(+)(out). Its function is as follows. Produces ATP from ADP in the presence of a proton gradient across the membrane. The alpha chain is a regulatory subunit. This is ATP synthase subunit alpha from Salinibacter ruber (strain DSM 13855 / M31).